We begin with the raw amino-acid sequence, 510 residues long: Outer spore wall protein 7 (510 aa).

The signal sequence occupies residues 1 to 23; the sequence is MKAVFKVTTALLACVFIARYLVC. The disordered stretch occupies residues 167–195; the sequence is FETDSETEDYEDDENENEDEDEDEDEDDV. Residues 169–195 are compositionally biased toward acidic residues; the sequence is TDSETEDYEDDENENEDEDEDEDEDDV. Phosphotyrosine is present on tyrosine 354.

This sequence belongs to the OSW/SHE family.

Its function is as follows. Involved in spore wall assembly. The sequence is that of Outer spore wall protein 7 from Saccharomyces cerevisiae (strain ATCC 204508 / S288c) (Baker's yeast).